Here is a 377-residue protein sequence, read N- to C-terminus: Chaperone protein DnaJ (377 aa).

One can recognise a J domain in the interval 5–70 (DYYEILGVSK…QKRAAYDQYG (66 aa)). The CR-type zinc-finger motif lies at 132–210 (GVTKEIRIPT…CHGHGRVEKT (79 aa)). Positions 145, 148, 162, 165, 184, 187, 198, and 201 each coordinate Zn(2+). CXXCXGXG motif repeat units follow at residues 145–152 (CDVCHGSG), 162–169 (CPTCHGAG), 184–191 (CPHCQGRG), and 198–205 (CNKCHGHG).

Belongs to the DnaJ family. As to quaternary structure, homodimer. The cofactor is Zn(2+).

It localises to the cytoplasm. Participates actively in the response to hyperosmotic and heat shock by preventing the aggregation of stress-denatured proteins and by disaggregating proteins, also in an autonomous, DnaK-independent fashion. Unfolded proteins bind initially to DnaJ; upon interaction with the DnaJ-bound protein, DnaK hydrolyzes its bound ATP, resulting in the formation of a stable complex. GrpE releases ADP from DnaK; ATP binding to DnaK triggers the release of the substrate protein, thus completing the reaction cycle. Several rounds of ATP-dependent interactions between DnaJ, DnaK and GrpE are required for fully efficient folding. Also involved, together with DnaK and GrpE, in the DNA replication of plasmids through activation of initiation proteins. This Klebsiella pneumoniae (strain 342) protein is Chaperone protein DnaJ.